The sequence spans 324 residues: Bile salt hydrolase/transferase (324 aa).

Catalysis depends on C2, which acts as the Nucleophile; acyl-thioester intermediate. Residues C2 and R16 each coordinate deoxycholate. A taurine-binding site is contributed by N79.

This sequence belongs to the peptidase C59 family. Homotetramer. The tetramer consists of a dimer of dimers.

The catalysed reaction is glycocholate + H2O = cholate + glycine. It catalyses the reaction glycodeoxycholate + H2O = deoxycholate + glycine. It carries out the reaction chenodeoxycholate + glycine = glycochenodeoxycholate + H2O. The enzyme catalyses cholate + taurine = taurocholate + H2O. The catalysed reaction is taurodeoxycholate + H2O = deoxycholate + taurine. It catalyses the reaction taurochenodeoxycholate + H2O = chenodeoxycholate + taurine. It carries out the reaction an L-alpha-amino acid + cholate = an N-choloyl-L-alpha-amino acid + H2O. The enzyme catalyses an L-alpha-amino acid + taurocholate = an N-choloyl-L-alpha-amino acid + taurine. The catalysed reaction is glycocholate + an L-alpha-amino acid = an N-choloyl-L-alpha-amino acid + glycine. Its pathway is lipid metabolism; bile acid biosynthesis. In terms of biological role, possesses dual functions in bile acid metabolism. Acts as a bile salt hydrolase that catalyzes the deconjugation of glycine- and taurine-linked bile salts, which occurs naturally in the intestines of animals, releasing amino acid residues and deconjugated bile salts (bile acids). Can hydrolyze the amide bond in the bile salts glycocholate (GCA), glycodeoxycholate (GDCA), glycochenodeoxycholate (GCDCA), taurocholate (TCA), taurodeoxycholate (TDCA) and taurochenodeoxycholate (TCDCA). Shows a preference for glycine-conjugated bile acids as substrates. Also acts as an amine N-acyltransferase that conjugates a wide variety of amino acids to conjugated and non-conjugated bile acids, thus producing bacterial bile acid amidates (BBAAs) - also named microbially conjugated bile acids (MCBAs) - in the gastrointestinal tract. These BBAAs may facilitate communication between the microbiota and host through the activation of host ligand-activated transcription factors. This Lactiplantibacillus plantarum (strain ATCC BAA-793 / NCIMB 8826 / WCFS1) (Lactobacillus plantarum) protein is Bile salt hydrolase/transferase.